The chain runs to 192 residues: Ion-translocating oxidoreductase complex subunit B (192 aa).

The interval 1 to 26 is hydrophobic; the sequence is MNAIWIAVAAVSLLGLAFGAILGYAS. Residues 32–91 form the 4Fe-4S domain; it reads EDDPVVEKIDEILPQSQCGQCGYPGCRPYAEAISCNGEKINRCAPGGEAVMLKIAELLNV. Residues Cys49, Cys52, Cys57, Cys74, Cys117, Cys120, Cys123, Cys127, Cys147, Cys150, Cys153, and Cys157 each contribute to the [4Fe-4S] cluster site. 4Fe-4S ferredoxin-type domains follow at residues 108–137 and 138–167; these read MVAF…GATR and AMHT…LQPV.

Belongs to the 4Fe4S bacterial-type ferredoxin family. RnfB subfamily. As to quaternary structure, the complex is composed of six subunits: RsxA, RsxB, RsxC, RsxD, RsxE and RsxG. [4Fe-4S] cluster serves as cofactor.

It localises to the cell inner membrane. Part of a membrane-bound complex that couples electron transfer with translocation of ions across the membrane. Required to maintain the reduced state of SoxR. The sequence is that of Ion-translocating oxidoreductase complex subunit B from Escherichia coli O17:K52:H18 (strain UMN026 / ExPEC).